A 366-amino-acid polypeptide reads, in one-letter code: Variable large protein 10 (366 aa).

An N-terminal signal peptide occupies residues 1–18; the sequence is MRKRISAIIMTLFMVLAS. Cys-19 is lipidated: N-palmitoyl cysteine. Residue Cys-19 is the site of S-diacylglycerol cysteine attachment.

It belongs to the variable large protein (Vlp) family. Beta subfamily.

It localises to the cell outer membrane. The Vlp and Vsp proteins are antigenically distinct proteins, only one vlp or vsp gene is transcriptionally active at any one time. Switching between these genes is a mechanism of host immune response evasion. In Borrelia hermsii, this protein is Variable large protein 10.